Reading from the N-terminus, the 491-residue chain is Cobyric acid synthase (491 aa).

The GATase cobBQ-type domain occupies 253-429 (AHRVAVVRLP…WHGSLEGDAL (177 aa)). Cysteine 334 acts as the Nucleophile in catalysis. The active site involves histidine 421.

It belongs to the CobB/CobQ family. CobQ subfamily.

It functions in the pathway cofactor biosynthesis; adenosylcobalamin biosynthesis. Functionally, catalyzes amidations at positions B, D, E, and G on adenosylcobyrinic A,C-diamide. NH(2) groups are provided by glutamine, and one molecule of ATP is hydrogenolyzed for each amidation. The sequence is that of Cobyric acid synthase from Mycobacterium marinum (strain ATCC BAA-535 / M).